A 399-amino-acid polypeptide reads, in one-letter code: Elongation factor Tu (399 aa).

The tr-type G domain maps to 10–209; it reads KPHVNIGTIG…EVDAYIPTPK (200 aa). The G1 stretch occupies residues 19 to 26; sequence GHVDHGKT. 19 to 26 serves as a coordination point for GTP; the sequence is GHVDHGKT. Thr-26 contacts Mg(2+). Residues 60-64 are G2; that stretch reads GITIA. The G3 stretch occupies residues 81–84; sequence DCPG. GTP-binding positions include 81–85 and 136–139; these read DCPGH and NKQD. Positions 136–139 are G4; it reads NKQD. Positions 174–176 are G5; the sequence is SAL.

The protein belongs to the TRAFAC class translation factor GTPase superfamily. Classic translation factor GTPase family. EF-Tu/EF-1A subfamily. Monomer.

It is found in the cytoplasm. It catalyses the reaction GTP + H2O = GDP + phosphate + H(+). Its function is as follows. GTP hydrolase that promotes the GTP-dependent binding of aminoacyl-tRNA to the A-site of ribosomes during protein biosynthesis. This Helicobacter pylori (strain P12) protein is Elongation factor Tu.